A 469-amino-acid chain; its full sequence is Serine/threonine-protein kinase orb6 (469 aa).

A Protein kinase domain is found at 93-392; the sequence is FSTIKVIGKG…AIEIMQHPFF (300 aa). ATP-binding positions include 99-107 and lysine 122; that span reads IGKGAFGEV. The active-site Proton acceptor is the aspartate 216. The region spanning 393-467 is the AGC-kinase C-terminal domain; that stretch reads TGIDWDHIRE…KKFNYLTMKG (75 aa).

Belongs to the protein kinase superfamily. Ser/Thr protein kinase family. As to quaternary structure, interacts with mob2.

The catalysed reaction is L-seryl-[protein] + ATP = O-phospho-L-seryl-[protein] + ADP + H(+). It carries out the reaction L-threonyl-[protein] + ATP = O-phospho-L-threonyl-[protein] + ADP + H(+). Its function is as follows. Interacts with pak1/shk1 and coordinates cell morphogenesis with the cell cycle. It is essential for maintenance of cell polarity and is involved in mitotic control. The protein is Serine/threonine-protein kinase orb6 (orb6) of Schizosaccharomyces pombe (strain 972 / ATCC 24843) (Fission yeast).